A 191-amino-acid chain; its full sequence is Peptidyl-tRNA hydrolase (191 aa).

Tyr15 lines the tRNA pocket. His20 functions as the Proton acceptor in the catalytic mechanism. Phe66, Asn68, and Asn114 together coordinate tRNA.

The protein belongs to the PTH family. Monomer.

It is found in the cytoplasm. It catalyses the reaction an N-acyl-L-alpha-aminoacyl-tRNA + H2O = an N-acyl-L-amino acid + a tRNA + H(+). In terms of biological role, hydrolyzes ribosome-free peptidyl-tRNAs (with 1 or more amino acids incorporated), which drop off the ribosome during protein synthesis, or as a result of ribosome stalling. Catalyzes the release of premature peptidyl moieties from peptidyl-tRNA molecules trapped in stalled 50S ribosomal subunits, and thus maintains levels of free tRNAs and 50S ribosomes. This chain is Peptidyl-tRNA hydrolase, found in Streptococcus agalactiae serotype Ia (strain ATCC 27591 / A909 / CDC SS700).